The chain runs to 312 residues: E3 ubiquitin-protein ligase RNF126-B (312 aa).

Zn(2+) contacts are provided by Cys-13, Cys-16, Cys-29, and Cys-32. The segment at 13–32 (CHSCTAEITPRLPEYTCPRC) adopts a C4-type zinc-finger fold. Disordered stretches follow at residues 41–63 (PETSRNSESNSSNNSGTDQNRPS) and 96–139 (GTSG…RNEG). Residues 44-55 (SRNSESNSSNNS) show a composition bias toward low complexity. Positions 102–115 (EETRDGESRREHQS) are enriched in basic and acidic residues. Basic residues predominate over residues 124-134 (PRARMSTRRGA). The segment at 228-269 (CPVCKEDYTVGESVRQLPCNHLFHNDCIIPWLEQHDTCPVCR) adopts an RING-type zinc-finger fold. Residues 275 to 312 (QNTATNPPGLTDMTFSSSSTSSSSSTSPTDENNTANNS) form a disordered region. The span at 290 to 301 (SSSSTSSSSSTS) shows a compositional bias: low complexity. The segment covering 302–312 (PTDENNTANNS) has biased composition (polar residues).

It is found in the cytoplasm. The protein localises to the nucleus. The catalysed reaction is S-ubiquitinyl-[E2 ubiquitin-conjugating enzyme]-L-cysteine + [acceptor protein]-L-lysine = [E2 ubiquitin-conjugating enzyme]-L-cysteine + N(6)-ubiquitinyl-[acceptor protein]-L-lysine.. It participates in protein modification; protein ubiquitination. Functionally, E3 ubiquitin-protein ligase that mediates ubiquitination oF target proteins. Depending on the associated E2 ligase, mediates 'Lys-27'-, 'Lys-29'-, 'Lys-48'- and/or 'Lys-63'-linked polyubiquitination of substrates. Part of a BAG6-dependent quality control process ensuring that proteins of the secretory pathway that are mislocalized to the cytosol are degraded by the proteasome. Probably acts by providing the ubiquitin ligase activity associated with the BAG6 complex and be responsible for ubiquitination of the hydrophobic mislocalized proteins and their targeting to the proteasome. The protein is E3 ubiquitin-protein ligase RNF126-B of Xenopus laevis (African clawed frog).